A 209-amino-acid chain; its full sequence is Uracil phosphoribosyltransferase (209 aa).

Residues Arg-79, Arg-104, and Asp-131–Ser-139 contribute to the 5-phospho-alpha-D-ribose 1-diphosphate site. Uracil-binding positions include Ile-194 and Gly-199–Ala-201. Asp-200 is a 5-phospho-alpha-D-ribose 1-diphosphate binding site.

The protein belongs to the UPRTase family. The cofactor is Mg(2+).

The catalysed reaction is UMP + diphosphate = 5-phospho-alpha-D-ribose 1-diphosphate + uracil. It functions in the pathway pyrimidine metabolism; UMP biosynthesis via salvage pathway; UMP from uracil: step 1/1. Allosterically activated by GTP. In terms of biological role, catalyzes the conversion of uracil and 5-phospho-alpha-D-ribose 1-diphosphate (PRPP) to UMP and diphosphate. The chain is Uracil phosphoribosyltransferase from Anoxybacillus flavithermus (strain DSM 21510 / WK1).